Reading from the N-terminus, the 545-residue chain is E3 ubiquitin-protein ligase ipaH9.8 (545 aa).

An interaction with target proteins region spans residues 1-242 (MLPINNNFSL…YHGPRIYFSM (242 aa)). 8 LRR repeats span residues 57 to 77 (NSDE…NLPA), 78 to 99 (QITL…PVTL), 100 to 117 (KKLY…VLPP), 118 to 139 (ALES…PDSL), 140 to 157 (LTMN…SLPL), 158 to 179 (ALKN…SEGN), 182 to 203 (VVRE…ILNL), and 205 to 228 (NECS…QRLT). The segment at 243-250 (SDGQQNTL) is linker. The E3 ubiquitin-protein ligase catalytic domain stretch occupies residues 251–545 (HRPLADAVTA…SENGSQLHHS (295 aa)). In terms of domain architecture, NEL spans 253–545 (PLADAVTAWF…SENGSQLHHS (293 aa)). Residue C337 is the Glycyl thioester intermediate of the active site.

It belongs to the LRR-containing bacterial E3 ligase family. In terms of assembly, also interacts with human and mouse U2AF1 (U2AF35). In terms of processing, ubiquitinated in the presence of host E1 ubiquitin-activating enzyme, E2 ubiquitin-conjugating enzyme and ubiquitin.

The protein localises to the secreted. It is found in the host cytoplasm. The protein resides in the host nucleus. It carries out the reaction S-ubiquitinyl-[E2 ubiquitin-conjugating enzyme]-L-cysteine + [acceptor protein]-L-lysine = [E2 ubiquitin-conjugating enzyme]-L-cysteine + N(6)-ubiquitinyl-[acceptor protein]-L-lysine.. With respect to regulation, exists in an autoinhibited state in the absence of substrate protein, due to interactions of the leucine-rich repeats with NEL domain. Is activated upon binding to a substrate protein. Effector E3 ubiquitin ligase that interferes with host's ubiquitination pathway and modulates the acute inflammatory responses, thus facilitating bacterial colonization within the host cell. Interacts with IKBKG (NEMO) and TNIP1 (ABIN-1), a ubiquitin-binding adapter protein, which results in TNIP1-dependent 'Lys-27'-linked polyubiquitination of IKBKG. Consequently, polyubiquitinated IKBKG undergoes proteasome-dependent degradation, which perturbs NF-kappa-B activation during bacterial infection. Mediates polyubiquitination of host U2AF1, leading to its proteasomal degradation. Catalyzes 'Lys-48'-linked polyubiquitination and subsequent degradation of a subset of host guanylate-binding proteins (GBP1, GBP2, GBP4 and GBP6), thereby suppressing host cell defense. In contrast, host GBP3 and GBP7 are not ubiquitinated by IpaH9.8. Uses UBE2D2 (UBCH5B) as an E2 ubiquitin-conjugating enzyme. The chain is E3 ubiquitin-protein ligase ipaH9.8 (ipaH9.8) from Shigella boydii serotype 4 (strain Sb227).